Here is a 62-residue protein sequence, read N- to C-terminus: DNA-directed RNA polymerase subunit Rpo10 (62 aa).

Zn(2+)-binding residues include Cys-6, Cys-9, Cys-43, and Cys-44.

Belongs to the archaeal Rpo10/eukaryotic RPB10 RNA polymerase subunit family. As to quaternary structure, part of the RNA polymerase complex. Requires Zn(2+) as cofactor.

It localises to the cytoplasm. The enzyme catalyses RNA(n) + a ribonucleoside 5'-triphosphate = RNA(n+1) + diphosphate. Functionally, DNA-dependent RNA polymerase (RNAP) catalyzes the transcription of DNA into RNA using the four ribonucleoside triphosphates as substrates. The chain is DNA-directed RNA polymerase subunit Rpo10 from Methanosarcina acetivorans (strain ATCC 35395 / DSM 2834 / JCM 12185 / C2A).